Here is a 263-residue protein sequence, read N- to C-terminus: 3-methyl-2-oxobutanoate hydroxymethyltransferase (263 aa).

Mg(2+) is bound by residues aspartate 45 and aspartate 84. Residues 45–46 (DS), aspartate 84, and lysine 112 contribute to the 3-methyl-2-oxobutanoate site. Glutamate 114 contributes to the Mg(2+) binding site. Glutamate 180 functions as the Proton acceptor in the catalytic mechanism.

Belongs to the PanB family. In terms of assembly, homodecamer; pentamer of dimers. It depends on Mg(2+) as a cofactor.

Its subcellular location is the cytoplasm. It carries out the reaction 3-methyl-2-oxobutanoate + (6R)-5,10-methylene-5,6,7,8-tetrahydrofolate + H2O = 2-dehydropantoate + (6S)-5,6,7,8-tetrahydrofolate. Its pathway is cofactor biosynthesis; (R)-pantothenate biosynthesis; (R)-pantoate from 3-methyl-2-oxobutanoate: step 1/2. Functionally, catalyzes the reversible reaction in which hydroxymethyl group from 5,10-methylenetetrahydrofolate is transferred onto alpha-ketoisovalerate to form ketopantoate. The chain is 3-methyl-2-oxobutanoate hydroxymethyltransferase from Salmonella arizonae (strain ATCC BAA-731 / CDC346-86 / RSK2980).